The following is a 226-amino-acid chain: Urease accessory protein UreF (226 aa).

The protein belongs to the UreF family. UreD, UreF and UreG form a complex that acts as a GTP-hydrolysis-dependent molecular chaperone, activating the urease apoprotein by helping to assemble the nickel containing metallocenter of UreC. The UreE protein probably delivers the nickel.

It localises to the cytoplasm. Required for maturation of urease via the functional incorporation of the urease nickel metallocenter. The sequence is that of Urease accessory protein UreF from Paraburkholderia phymatum (strain DSM 17167 / CIP 108236 / LMG 21445 / STM815) (Burkholderia phymatum).